We begin with the raw amino-acid sequence, 630 residues long: Chaperone protein HtpG (630 aa).

Positions 1–327 (MSVETYKFDA…SEDLSLNISR (327 aa)) are a; substrate-binding. A b region spans residues 328–551 (ETLQHSPLID…EGSMDIRTER (224 aa)). Over residues 483–499 (TKTAKSSDTNNDGKDDT) the composition is skewed to basic and acidic residues. A disordered region spans residues 483-504 (TKTAKSSDTNNDGKDDTSSSDD). Residues 552-630 (FLIEQKQLSS…INFFIEKSVN (79 aa)) form a c region.

Belongs to the heat shock protein 90 family. Homodimer.

The protein resides in the cytoplasm. Functionally, molecular chaperone. Has ATPase activity. This Orientia tsutsugamushi (strain Boryong) (Rickettsia tsutsugamushi) protein is Chaperone protein HtpG.